The primary structure comprises 376 residues: Protein FhaE (376 aa).

Positions 1-37 are cleaved as a signal peptide; that stretch reads MSQIFADRRAAVPARVISFCGAALAVWAGLAVQPAMA.

This chain is Protein FhaE (fhaE), found in Bordetella pertussis (strain Tohama I / ATCC BAA-589 / NCTC 13251).